Here is a 455-residue protein sequence, read N- to C-terminus: Chromosomal replication initiator protein DnaA (455 aa).

Positions 1–75 (MDTNNNIEKE…EILSQNKVGM (75 aa)) are domain I, interacts with DnaA modulators. Positions 75–106 (MHLAHSVDVRIEVAPKIQINAQANINYKAIKT) are domain II. The tract at residues 107-321 (SVKDSYTFEN…GAIIKISVNA (215 aa)) is domain III, AAA+ region. 4 residues coordinate ATP: glycine 151, glycine 153, lysine 154, and threonine 155. The interval 322–455 (NLMNAPIDLN…DKKTAFNSSE (134 aa)) is domain IV, binds dsDNA.

It belongs to the DnaA family. In terms of assembly, oligomerizes as a right-handed, spiral filament on DNA at oriC.

The protein resides in the cytoplasm. In terms of biological role, plays an essential role in the initiation and regulation of chromosomal replication. ATP-DnaA binds to the origin of replication (oriC) to initiate formation of the DNA replication initiation complex once per cell cycle. Binds the DnaA box (a 9 base pair repeat at the origin) and separates the double-stranded (ds)DNA. Forms a right-handed helical filament on oriC DNA; dsDNA binds to the exterior of the filament while single-stranded (ss)DNA is stabiized in the filament's interior. The ATP-DnaA-oriC complex binds and stabilizes one strand of the AT-rich DNA unwinding element (DUE), permitting loading of DNA polymerase. After initiation quickly degrades to an ADP-DnaA complex that is not apt for DNA replication. Binds acidic phospholipids. In Helicobacter pylori (strain G27), this protein is Chromosomal replication initiator protein DnaA.